Consider the following 208-residue polypeptide: FMRFamide-like neuropeptide 18 (208 aa).

The signal sequence occupies residues 1–21; sequence MQRWSGVLLISLCCLLRGALA. Positions 22–83 are excised as a propeptide; the sequence is YTEPIYEIVE…VWEKRESSVQ (62 aa). At Phe-93 the chain carries Phenylalanine amide. Positions 97 to 101 are excised as a propeptide; it reads AYFDE. A Phenylalanine amide modification is found at Phe-111. The propeptide occupies 115-119; the sequence is SYFDE. Phe-129 carries the post-translational modification Phenylalanine amide. Positions 133-137 are excised as a propeptide; the sequence is DVPMD. Phenylalanine amide is present on Phe-147. A propeptide spanning residues 151-158 is cleaved from the precursor; that stretch reads DYMADSFD. Phenylalanine amide is present on residues Phe-169 and Phe-180. Residues 184–195 constitute a propeptide that is removed on maturation; it reads SDLEEHYAGVLL. A Phenylalanine amide modification is found at Phe-205.

The protein belongs to the FARP (FMRFamide related peptide) family. Post-translationally, may be processed by convertase egl-3. Expressed in head neurons and weakly in ventral nerve cord. Expressed in the interneurons AVA, AIY and RIG, the motor neuron RIM and the pharyngeal neurons M2 and M3. EMPGVLRF-amide: Expressed in cholinergic pharyngeal motoneurons M2 and M3.

It is found in the secreted. FMRFamide-like neuropeptides. Ligand to G-protein coupled receptor npr-1. Involved in modulating locomotion quiescence during the sleep-like state called lethargus which occurs during molting between larval and adult stages, acting via npr-1. Together with flp-1, plays a homeostatic role by acting on the GABAergic neural transmission at neuromuscular junctions to prevent overexcitation of the locomotor circuit. Plays a role in the navigational capacity of sperm and the targeting of sperm derived from males to the fertilization site in the uterus of hermaphrodites. Functionally, SVPGVLRF-amide: Excites muscle tension. In terms of biological role, activates the G-protein coupled receptor npr-1 more effectively than other flp-18 peptides. Inhibits the activity of dissected pharyngeal myogenic muscle system. This chain is FMRFamide-like neuropeptide 18, found in Caenorhabditis elegans.